Here is a 340-residue protein sequence, read N- to C-terminus: Entry-fusion complex protein OPG094 (340 aa).

Residues 1–20 (MGGGVSVELPKRDPPPGVPT) are disordered. The N-myristoyl glycine; by host moiety is linked to residue G2. The Virion surface segment spans residues 2–319 (GGGVSVELPK…VQHNIKHSFD (318 aa)). Residues 320 to 340 (LKLHLISLLSLLVIWILIVAI) form a helical; Signal-anchor for type II membrane protein membrane-spanning segment.

The protein belongs to the orthopoxvirus OPG086 family. In terms of assembly, interacts with OPG143. Component of the entry fusion complex (EFC) composed of OPG053, OPG076, OPG086, OPG094, OPG095, OPG099, OPG107, OPG143, OPG104, OPG147 and OPG155. Except for OPG095 and OPG053, each of the EFC proteins is required for assembly or stability of the complex. Unglycosylated because produced in viral factories instead of the classic ER -Golgi route.

It is found in the virion membrane. Component of the entry fusion complex (EFC), which consists of 11 proteins. During cell infection, this complex mediates entry of the virion core into the host cytoplasm by a two-step mechanism consisting of lipid mixing of the viral and cellular membranes and subsequent pore formation. The polypeptide is Entry-fusion complex protein OPG094 (OPG094) (Homo sapiens (Human)).